Consider the following 355-residue polypeptide: UDP-N-acetylglucosamine--N-acetylmuramyl-(pentapeptide) pyrophosphoryl-undecaprenol N-acetylglucosamine transferase (355 aa).

UDP-N-acetyl-alpha-D-glucosamine contacts are provided by residues 15 to 17 (TGG), Asn127, Arg163, Ser191, Ile244, 263 to 268 (ALTVSE), and Gln288.

This sequence belongs to the glycosyltransferase 28 family. MurG subfamily.

It localises to the cell inner membrane. The enzyme catalyses di-trans,octa-cis-undecaprenyl diphospho-N-acetyl-alpha-D-muramoyl-L-alanyl-D-glutamyl-meso-2,6-diaminopimeloyl-D-alanyl-D-alanine + UDP-N-acetyl-alpha-D-glucosamine = di-trans,octa-cis-undecaprenyl diphospho-[N-acetyl-alpha-D-glucosaminyl-(1-&gt;4)]-N-acetyl-alpha-D-muramoyl-L-alanyl-D-glutamyl-meso-2,6-diaminopimeloyl-D-alanyl-D-alanine + UDP + H(+). Its pathway is cell wall biogenesis; peptidoglycan biosynthesis. Functionally, cell wall formation. Catalyzes the transfer of a GlcNAc subunit on undecaprenyl-pyrophosphoryl-MurNAc-pentapeptide (lipid intermediate I) to form undecaprenyl-pyrophosphoryl-MurNAc-(pentapeptide)GlcNAc (lipid intermediate II). The chain is UDP-N-acetylglucosamine--N-acetylmuramyl-(pentapeptide) pyrophosphoryl-undecaprenol N-acetylglucosamine transferase from Salmonella arizonae (strain ATCC BAA-731 / CDC346-86 / RSK2980).